A 319-amino-acid polypeptide reads, in one-letter code: 2-dehydropantoate 2-reductase (319 aa).

NADP(+) is bound by residues 10 to 15 (GTGALG) and N105. N105 lines the substrate pocket. K192 acts as the Proton donor in catalysis. Positions 196, 200, and 262 each coordinate substrate. E274 lines the NADP(+) pocket.

Belongs to the ketopantoate reductase family.

The protein resides in the cytoplasm. It carries out the reaction (R)-pantoate + NADP(+) = 2-dehydropantoate + NADPH + H(+). The protein operates within cofactor biosynthesis; (R)-pantothenate biosynthesis; (R)-pantoate from 3-methyl-2-oxobutanoate: step 2/2. In terms of biological role, catalyzes the NADPH-dependent reduction of ketopantoate into pantoic acid. This chain is 2-dehydropantoate 2-reductase, found in Nostoc sp. (strain PCC 7120 / SAG 25.82 / UTEX 2576).